Here is a 420-residue protein sequence, read N- to C-terminus: Histidine--tRNA ligase (420 aa).

This sequence belongs to the class-II aminoacyl-tRNA synthetase family. In terms of assembly, homodimer.

The protein resides in the cytoplasm. The enzyme catalyses tRNA(His) + L-histidine + ATP = L-histidyl-tRNA(His) + AMP + diphosphate + H(+). This chain is Histidine--tRNA ligase, found in Staphylococcus aureus (strain Mu3 / ATCC 700698).